Consider the following 257-residue polypeptide: Acetylglutamate kinase (257 aa).

Substrate-binding positions include G43–G44, R65, and N157.

This sequence belongs to the acetylglutamate kinase family. ArgB subfamily.

It localises to the cytoplasm. The enzyme catalyses N-acetyl-L-glutamate + ATP = N-acetyl-L-glutamyl 5-phosphate + ADP. It functions in the pathway amino-acid biosynthesis; L-arginine biosynthesis; N(2)-acetyl-L-ornithine from L-glutamate: step 2/4. Its function is as follows. Catalyzes the ATP-dependent phosphorylation of N-acetyl-L-glutamate. This Actinobacillus succinogenes (strain ATCC 55618 / DSM 22257 / CCUG 43843 / 130Z) protein is Acetylglutamate kinase.